Consider the following 124-residue polypeptide: UPF0538 protein (124 aa).

Belongs to the UPF0538 family.

In Dictyostelium discoideum (Social amoeba), this protein is UPF0538 protein.